An 842-amino-acid chain; its full sequence is CRM-domain containing factor CFM3, chloroplastic/mitochondrial (842 aa).

A chloroplast and mitochondrion-targeting transit peptide spans 1-82 (MAMASSPACH…RSSGRSTMSL (82 aa)). 3 disordered regions span residues 49-80 (AALD…RSTM), 141-160 (RFPW…SARS), and 254-290 (VDYD…LPTE). One can recognise a CRM 1 domain in the interval 167-263 (LTLPAAELRR…VDYDEPEPTK (97 aa)). Over residues 280-290 (GSSNPSLLPTE) the composition is skewed to polar residues. CRM domains lie at 371 to 468 (PSLS…ELAE) and 582 to 682 (ETIT…SSLR). Residues 703–732 (QALSRHFAKLNRKVERLKAELVQMEDVKEQ) adopt a coiled-coil conformation. The disordered stretch occupies residues 768-842 (VAGATADDDG…DRRNHDVNEY (75 aa)). Positions 786–812 (DEADYPDSDDEAGDCSEDEGEDDEDEA) are enriched in acidic residues. Residues 831–842 (DTDRRNHDVNEY) are compositionally biased toward basic and acidic residues.

Interacts with RNA. Part of large ribonucleo-protein particles that contain CAF1 and/or CAF2, and RNC1.

Its subcellular location is the plastid. The protein resides in the chloroplast stroma. It is found in the mitochondrion. Binds specific group II introns in chloroplasts and facilitates their splicing. Acts on subgroup IIB introns. The substrates of the subgroup IIB also require the CRM domain proteins CAF1 or CAF2, with a simultaneous binding of CFM3 and CAF1 or CAF2. May influence the biogenesis of the mitochondrial small ribosomal subunit. This chain is CRM-domain containing factor CFM3, chloroplastic/mitochondrial, found in Zea mays (Maize).